The sequence spans 301 residues: Possible hemolysin C (301 aa).

CBS domains follow at residues M80–L142 and L145–E202.

It belongs to the UPF0053 family. Hemolysin C subfamily.

In Rickettsia akari (strain Hartford), this protein is Possible hemolysin C (tlyC).